We begin with the raw amino-acid sequence, 1063 residues long: JmjC domain-containing histone demethylation protein 1 (1063 aa).

The region spanning 86–266 (LYNVLSLEYS…TQLRVYQVEN (181 aa)) is the JmjC domain. Residue T160 coordinates substrate. 2 residues coordinate Fe cation: H163 and D165. K180 is a binding site for substrate. H234 lines the Fe cation pocket. Over residues 379–389 (GLEEEAEDEDV) the composition is skewed to acidic residues. Disordered stretches follow at residues 379–400 (GLEE…AEER), 554–750 (ESDE…NPYN), and 776–1040 (VELH…KRAK). Residues 390-400 (KPETKKEAEER) show a composition bias toward basic and acidic residues. Acidic residues-rich tracts occupy residues 594 to 605 (PEYDEDMEEYDP) and 613 to 631 (ELEE…EEEY). Low complexity predominate over residues 636–646 (TRRSSTRGSAS). Basic and acidic residues-rich tracts occupy residues 647–665 (TKEE…PKKE), 674–712 (EKSS…ELRA), 776–806 (VELH…HEDS), 813–835 (PYDR…DSHR), and 892–902 (EPRRSNDRRTS). Low complexity predominate over residues 926–937 (AEAASASSSRHS). Polar residues-rich tracts occupy residues 950–963 (LNSS…TPMY) and 973–982 (WLPNTSNVTR). Pro residues predominate over residues 1005–1016 (PPFPRSITPPPV). Polar residues predominate over residues 1020–1030 (ELKSQSNGRKS). The segment covering 1031 to 1040 (NYSEDGKRAK) has biased composition (basic and acidic residues).

It belongs to the JHDM1 histone demethylase family. The cofactor is Fe(2+).

It localises to the nucleus. It catalyses the reaction N(6),N(6)-dimethyl-L-lysyl(36)-[histone H3] + 2 2-oxoglutarate + 2 O2 = L-lysyl(36)-[histone H3] + 2 formaldehyde + 2 succinate + 2 CO2. Functionally, histone demethylase that specifically demethylates 'Lys-36' of histone H3, thereby playing a central role in histone code. The polypeptide is JmjC domain-containing histone demethylation protein 1 (jhdm-1) (Caenorhabditis briggsae).